Here is a 233-residue protein sequence, read N- to C-terminus: 2-C-methyl-D-erythritol 4-phosphate cytidylyltransferase (233 aa).

This sequence belongs to the IspD/TarI cytidylyltransferase family. IspD subfamily.

The catalysed reaction is 2-C-methyl-D-erythritol 4-phosphate + CTP + H(+) = 4-CDP-2-C-methyl-D-erythritol + diphosphate. It functions in the pathway isoprenoid biosynthesis; isopentenyl diphosphate biosynthesis via DXP pathway; isopentenyl diphosphate from 1-deoxy-D-xylulose 5-phosphate: step 2/6. Its function is as follows. Catalyzes the formation of 4-diphosphocytidyl-2-C-methyl-D-erythritol from CTP and 2-C-methyl-D-erythritol 4-phosphate (MEP). This chain is 2-C-methyl-D-erythritol 4-phosphate cytidylyltransferase, found in Nitrosomonas eutropha (strain DSM 101675 / C91 / Nm57).